Consider the following 211-residue polypeptide: Peptidyl-prolyl cis-trans isomerase-like 3 (211 aa).

One can recognise a PPIase cyclophilin-type domain in the interval 1–204; that stretch reads MSVTLHTTHG…ETLRINRVTI (204 aa).

Belongs to the cyclophilin-type PPIase family. PPIL3 subfamily.

It carries out the reaction [protein]-peptidylproline (omega=180) = [protein]-peptidylproline (omega=0). Functionally, PPIases accelerate the folding of proteins. It catalyzes the cis-trans isomerization of proline imidic peptide bonds in oligopeptides. The polypeptide is Peptidyl-prolyl cis-trans isomerase-like 3 (cyp10) (Emericella nidulans (strain FGSC A4 / ATCC 38163 / CBS 112.46 / NRRL 194 / M139) (Aspergillus nidulans)).